We begin with the raw amino-acid sequence, 245 residues long: Phycocyanobilin:ferredoxin oxidoreductase (245 aa).

It belongs to the HY2 family.

The catalysed reaction is (2R,3Z)-phycocyanobilin + 4 oxidized [2Fe-2S]-[ferredoxin] = biliverdin IXalpha + 4 reduced [2Fe-2S]-[ferredoxin] + 4 H(+). Functionally, catalyzes the four-electron reduction of biliverdin IX-alpha (2-electron reduction at both the A and D rings); the reaction proceeds via an isolatable 2-electron intermediate, 181,182-dihydrobiliverdin. This Gloeothece citriformis (strain PCC 7424) (Cyanothece sp. (strain PCC 7424)) protein is Phycocyanobilin:ferredoxin oxidoreductase.